A 289-amino-acid chain; its full sequence is ATP synthase subunit a (289 aa).

Transmembrane regions (helical) follow at residues 43-63, 103-123, 160-180, 193-213, 232-252, and 259-279; these read AFHL…LLIF, VIAP…AVDL, FCVF…GGFI, IFVQ…TLIA, VFIL…GLGV, and AVFH…LTIV.

The protein belongs to the ATPase A chain family. F-type ATPases have 2 components, CF(1) - the catalytic core - and CF(0) - the membrane proton channel. CF(1) has five subunits: alpha(3), beta(3), gamma(1), delta(1), epsilon(1). CF(0) has three main subunits: a(1), b(2) and c(9-12). The alpha and beta chains form an alternating ring which encloses part of the gamma chain. CF(1) is attached to CF(0) by a central stalk formed by the gamma and epsilon chains, while a peripheral stalk is formed by the delta and b chains.

Its subcellular location is the cell inner membrane. Functionally, key component of the proton channel; it plays a direct role in the translocation of protons across the membrane. This chain is ATP synthase subunit a, found in Pseudomonas putida (strain ATCC 700007 / DSM 6899 / JCM 31910 / BCRC 17059 / LMG 24140 / F1).